Consider the following 1020-residue polypeptide: MSLTSAAGIISLLDEPMPDLKVFALKKLDNIVDEFWPEISESIEKIEMLHEDRSFPENKLAGMVASKVFYHLGSFEDALTYALGAGDLFDVNARNEYTETIIAKCIDFYIAQRVEFIENPKEASVVDERLEGIVNRMIQRCLDDNQFRQALGIALETRRMDTFKDAIMKSDDVRGMLAYAYNVTMSLIQNRGFRNEVLRCLVSLYRDLGVPDYVNMCQCLIFLEDPFAVAEMLDNLTRSSVETNNLMAYQIAFDLYESATQEFLGNVLQHLKNTAPIPTALPSTFKPQGTTSEDGAKSEGDKSKSDEDITEETPADDKVERTIDSLNEVEKLHQKNIEKLISILSGEVSIDLQLQFLIRSNHADLQVLRGTKEAVRVSICHTATVIANAFMHSGTTSDQFLRDNLDWLARATNWAKLTATASLGVIHRGHEKDSLALMQSYLPKEAGPSSGYSEGGALYALGLIHANHGANIIDYLLQQLKDAQNENVRHGGCLGLGLAGMGTHRQDLYEQLKFNLYQDDAVTGEAAGIAMGMVMLGSKNAQAIEDMVSYAQETQHEKILRGLAVGISLTMFSRLEEADPLVTSLSSDKDPVLRRSGMYTIAMAYNGTGSNKAIRKLLHVAVSDVNDDVRRAAVTAIGFILFRSPEQCPSVVSLLAESYNPHVRYGAAMALGIACAGTGLREAIALLEPMVKFDPVNFVRQGALIASAMILIQHTDQSCPKSTFFRQLYAEVISNKHEDVMAKYGAILAQGIIDAGGRNATLSLQSRTGHTNLQAVVGMLAFTQYWYWFPLAHTLSLAFTPTCVIGLNSDLKMPKMEYKSAAKPSLYAYPAPLEEKKSEEREKVATAVLSIAARQKRRENADKKEDEKMDVDEDSKEGAAVKKDEEAKADEKMVTDEKPKKKDEKEKKKEEDKEKEAAGTSSEKDKDKEKDKKEKKEPEPTSEILQNPARVLRQQLKVLSVIDGQSYEPLKDVTIGGIIVFQHTGKAEDQELVEPVAAFGPMNDEEKEPEPPEPFEYIED.

A disordered region spans residues 279-322; it reads TALPSTFKPQGTTSEDGAKSEGDKSKSDEDITEETPADDKVERT. Over residues 281-293 the composition is skewed to polar residues; the sequence is LPSTFKPQGTTSE. Position 291 is a phosphothreonine (Thr-291). Residues 294–307 are compositionally biased toward basic and acidic residues; that stretch reads DGAKSEGDKSKSDE. Phosphoserine occurs at positions 298, 303, and 305. Thr-310 carries the phosphothreonine modification. PC repeat units follow at residues 418-452, 456-489, 491-525, 526-560, 562-595, 596-631, 632-664, 666-701, 702-742, and 745-777; these read TATA…SSGY, GALY…ENVR, GGCL…VTGE, AAGI…EKIL, GLAV…VLRR, SGMY…DVRR, AAVT…PHVR, GAAM…FVRQ, GALI…DVMA, and GAIL…QAVV. 2 disordered regions span residues 855–950 and 999–1020; these read QKRR…NPAR and FGPM…YIED. Basic and acidic residues-rich tracts occupy residues 858–867 and 876–939; these read RENADKKEDE and KEGA…KEPE. A compositionally biased stretch (acidic residues) spans 1003 to 1020; that stretch reads NDEEKEPEPPEPFEYIED.

The protein belongs to the proteasome subunit S1 family.

In terms of biological role, acts as a regulatory subunit of the 26S proteasome which is involved in the ATP-dependent degradation of ubiquitinated proteins. The chain is 26S proteasome non-ATPase regulatory subunit 1 (Rpn2) from Drosophila melanogaster (Fruit fly).